A 569-amino-acid chain; its full sequence is Proline--tRNA ligase (569 aa).

This sequence belongs to the class-II aminoacyl-tRNA synthetase family. ProS type 1 subfamily. In terms of assembly, homodimer.

The protein localises to the cytoplasm. The enzyme catalyses tRNA(Pro) + L-proline + ATP = L-prolyl-tRNA(Pro) + AMP + diphosphate. Its function is as follows. Catalyzes the attachment of proline to tRNA(Pro) in a two-step reaction: proline is first activated by ATP to form Pro-AMP and then transferred to the acceptor end of tRNA(Pro). As ProRS can inadvertently accommodate and process non-cognate amino acids such as alanine and cysteine, to avoid such errors it has two additional distinct editing activities against alanine. One activity is designated as 'pretransfer' editing and involves the tRNA(Pro)-independent hydrolysis of activated Ala-AMP. The other activity is designated 'posttransfer' editing and involves deacylation of mischarged Ala-tRNA(Pro). The misacylated Cys-tRNA(Pro) is not edited by ProRS. This is Proline--tRNA ligase from Campylobacter jejuni (strain RM1221).